An 825-amino-acid polypeptide reads, in one-letter code: ATP-dependent RNA helicase DBP4 (825 aa).

A disordered region spans residues 1–34; it reads MAAGNAKGGFAHRNKSVPKKTDAKSLKRKRGQED. The span at 19–34 shows a compositional bias: basic and acidic residues; that stretch reads KKTDAKSLKRKRGQED. The Q motif motif lies at 53–81; sequence KQFTDLPLCEATASGLRASHFEVLTDVQR. The 175-residue stretch at 84–258 folds into the Helicase ATP-binding domain; sequence IPLALKGRDI…RLSLKEPEYV (175 aa). 97–104 lines the ATP pocket; that stretch reads AKTGSGKT. The DEAD box motif lies at 206–209; that stretch reads DEAD. The 156-residue stretch at 284 to 439 folds into the Helicase C-terminal domain; sequence KLDTLFGFLR…NKKKSIKNEL (156 aa). Disordered regions lie at residues 508 to 536 and 676 to 825; these read NASRAAISSGSESDSDDEGKPKKDKKQVR and AESE…LLED. 2 stretches are compositionally biased toward basic and acidic residues: residues 677 to 691 and 700 to 714; these read ESEKVKEADVDDKQA and RERQKARERGEELER. 3 stretches are compositionally biased toward acidic residues: residues 730 to 739, 761 to 770, and 805 to 816; these read GEGDEGDEDP, GEDEGDDGEV, and MAEEPENLEDLE.

The protein belongs to the DEAD box helicase family. DDX10/DBP4 subfamily. As to quaternary structure, interacts with the U3 and U14 snoRNAs. Associates with pre-ribosomal complexes.

The protein localises to the nucleus. Its subcellular location is the nucleolus. It carries out the reaction ATP + H2O = ADP + phosphate + H(+). In terms of biological role, ATP-dependent RNA helicase required for ribosome biogenesis. Involved in the release of U14 snoRNA in pre-ribosomal complexes. Required for pre-rRNA cleavage at site A2. This Chaetomium globosum (strain ATCC 6205 / CBS 148.51 / DSM 1962 / NBRC 6347 / NRRL 1970) (Soil fungus) protein is ATP-dependent RNA helicase DBP4 (DBP4).